A 498-amino-acid polypeptide reads, in one-letter code: Pyridine nucleotide-disulfide oxidoreductase domain-containing protein 1 (498 aa).

Methionine 1 is modified (N-acetylmethionine).

The protein belongs to the class-I pyridine nucleotide-disulfide oxidoreductase family. PYROXD1 subfamily. FAD serves as cofactor.

The protein resides in the nucleus. The protein localises to the cytoplasm. It localises to the myofibril. Its subcellular location is the sarcomere. Functionally, probable FAD-dependent oxidoreductase; involved in the cellular oxidative stress response. Required for normal sarcomere structure and muscle fiber integrity. The protein is Pyridine nucleotide-disulfide oxidoreductase domain-containing protein 1 (Pyroxd1) of Mus musculus (Mouse).